The sequence spans 337 residues: Casein kinase I isoform alpha (337 aa).

Ala-2 bears the N-acetylalanine mark. Ser-4 is subject to Phosphoserine. N6-acetyllysine is present on Lys-8. Residues 17–285 enclose the Protein kinase domain; the sequence is YKLVRKIGSG…YLRQLFRILF (269 aa). Residues 23–31 and Lys-46 contribute to the ATP site; that span reads IGSGSFGDI. The Proton acceptor role is filled by Asp-136. The segment covering 309-325 has biased composition (low complexity); that stretch reads AASSSGQGQQAQTPTGK. The tract at residues 309–337 is disordered; it reads AASSSGQGQQAQTPTGKQTDKTKSNMKGF.

It belongs to the protein kinase superfamily. CK1 Ser/Thr protein kinase family. Casein kinase I subfamily. Interacts with the Axin complex. Interacts with TUT1, leading to TUT1 phosphorylation. Interacts with FAM83A, FAM83B, FAM83C, FAM83D, FAM83E, FAM83F, FAM83G and FAM83H (via DUF1669). Interaction with FAM83H recruits CSNK1A1 to keratin filaments. Phosphorylated by MTOR in response to mitogenic stimulation, leading to its activation.

Its subcellular location is the cytoplasm. It is found in the cytoskeleton. It localises to the microtubule organizing center. The protein localises to the centrosome. The protein resides in the chromosome. Its subcellular location is the centromere. It is found in the kinetochore. It localises to the nucleus speckle. The protein localises to the cilium basal body. The protein resides in the spindle. It carries out the reaction L-seryl-[protein] + ATP = O-phospho-L-seryl-[protein] + ADP + H(+). It catalyses the reaction L-threonyl-[protein] + ATP = O-phospho-L-threonyl-[protein] + ADP + H(+). Its function is as follows. Casein kinases are operationally defined by their preferential utilization of acidic proteins such as caseins as substrates. Can phosphorylate a large number of proteins. Participates in Wnt signaling. Phosphorylates CTNNB1 at 'Ser-45'. May phosphorylate PER1 and PER2. May play a role in segregating chromosomes during mitosis. May play a role in keratin cytoskeleton disassembly and thereby, it may regulate epithelial cell migration. Acts as a positive regulator of mTORC1 and mTORC2 signaling in response to nutrients by mediating phosphorylation of DEPTOR inhibitor. Acts as an inhibitor of NLRP3 inflammasome assembly by mediating phosphorylation of NLRP3. This Mus musculus (Mouse) protein is Casein kinase I isoform alpha (Csnk1a1).